We begin with the raw amino-acid sequence, 427 residues long: Serine hydroxymethyltransferase (427 aa).

(6S)-5,6,7,8-tetrahydrofolate is bound by residues Leu122 and 126–128; that span reads GHL. An N6-(pyridoxal phosphate)lysine modification is found at Lys231. Residues Glu247 and 355-357 each bind (6S)-5,6,7,8-tetrahydrofolate; that span reads SPF.

It belongs to the SHMT family. Homodimer. The cofactor is pyridoxal 5'-phosphate.

The protein resides in the cytoplasm. It carries out the reaction (6R)-5,10-methylene-5,6,7,8-tetrahydrofolate + glycine + H2O = (6S)-5,6,7,8-tetrahydrofolate + L-serine. It participates in one-carbon metabolism; tetrahydrofolate interconversion. Its pathway is amino-acid biosynthesis; glycine biosynthesis; glycine from L-serine: step 1/1. In terms of biological role, catalyzes the reversible interconversion of serine and glycine with tetrahydrofolate (THF) serving as the one-carbon carrier. This reaction serves as the major source of one-carbon groups required for the biosynthesis of purines, thymidylate, methionine, and other important biomolecules. Also exhibits THF-independent aldolase activity toward beta-hydroxyamino acids, producing glycine and aldehydes, via a retro-aldol mechanism. This is Serine hydroxymethyltransferase from Synechocystis sp. (strain ATCC 27184 / PCC 6803 / Kazusa).